A 383-amino-acid polypeptide reads, in one-letter code: Succinyl-diaminopimelate desuccinylase (383 aa).

Histidine 73 provides a ligand contact to Zn(2+). Residue aspartate 75 is part of the active site. Zn(2+) is bound at residue aspartate 107. Residue glutamate 141 is the Proton acceptor of the active site. Zn(2+)-binding residues include glutamate 142, glutamate 170, and histidine 356.

It belongs to the peptidase M20A family. DapE subfamily. Homodimer. It depends on Zn(2+) as a cofactor. The cofactor is Co(2+).

The catalysed reaction is N-succinyl-(2S,6S)-2,6-diaminopimelate + H2O = (2S,6S)-2,6-diaminopimelate + succinate. The protein operates within amino-acid biosynthesis; L-lysine biosynthesis via DAP pathway; LL-2,6-diaminopimelate from (S)-tetrahydrodipicolinate (succinylase route): step 3/3. Functionally, catalyzes the hydrolysis of N-succinyl-L,L-diaminopimelic acid (SDAP), forming succinate and LL-2,6-diaminopimelate (DAP), an intermediate involved in the bacterial biosynthesis of lysine and meso-diaminopimelic acid, an essential component of bacterial cell walls. The protein is Succinyl-diaminopimelate desuccinylase of Pseudomonas syringae pv. syringae (strain B728a).